A 111-amino-acid chain; its full sequence is SRA stem-loop-interacting RNA-binding protein, mitochondrial (111 aa).

Residues 19–96 (PVAFVRKIPW…VKLHVQPQRP (78 aa)) form the RRM domain. Residues 92–111 (QPQRPKALQGDQTSDEEKDF) form a disordered region. Threonine 104 is subject to Phosphothreonine. Serine 105 bears the Phosphoserine mark.

The protein resides in the mitochondrion. Its subcellular location is the nucleus. In terms of biological role, RNA-binding protein that acts as a nuclear receptor corepressor. Probably acts by binding the SRA RNA, and repressing the SRA-mediated nuclear receptor coactivation. Binds the STR7 loop of SRA RNA. Also able to repress glucocorticoid (GR), androgen (AR), thyroid (TR) and VDR-mediated transactivation. In Bos taurus (Bovine), this protein is SRA stem-loop-interacting RNA-binding protein, mitochondrial (SLIRP).